Consider the following 1368-residue polypeptide: Indole-3-acetaldehyde oxidase (1368 aa).

A 2Fe-2S ferredoxin-type domain is found at 19 to 108; sequence TSLVFAINGQ…GCSITTSDGL (90 aa). Residues Cys60, Cys65, and Cys68 each contribute to the [2Fe-2S] cluster site. The FAD-binding PCMH-type domain occupies 246–427; that stretch reads LHSRKYRWSS…LSLEIPSWHS (182 aa).

Belongs to the xanthine dehydrogenase family. As to quaternary structure, aldehyde oxidases (AO) are homodimers and heterodimers of AO subunits. AO-alpha is an AAO1 homodimer; AO-beta is an AAO1-AAO2 heterodimer. [2Fe-2S] cluster is required as a cofactor. FAD serves as cofactor. It depends on Mo-molybdopterin as a cofactor. In terms of tissue distribution, predominantly expressed in roots, seedlings, mature siliques and seeds, and to lower extent in stems and rosettes. In seedlings, mostly expressed in lower part of hypocotyls and roots.

It localises to the cytoplasm. The catalysed reaction is indole-3-acetaldehyde + O2 + H2O = (indol-3-yl)acetate + H2O2 + H(+). Its activity is regulated as follows. Strongly inhibited by iodoacetate and potassium cyanide (KCN). Weakly inhibited by 2-mercaptoethanol, dithiothreitol (DTT), menadione, estradiol, 4'-(9-acridinylamino)methanesulfon-m-anisidine (mAMSA), allopurinol and tritonX-100. Not affected by p-chloromercuribenzoate. In higher plants aldehyde oxidases (AO) appear to be homo- and heterodimeric assemblies of AO subunits with probably different physiological functions. AO-alpha may be involved in the biosynthesis of auxin, and in biosynthesis of abscisic acid (ABA) in seeds. In vitro, AO-alpha uses heptaldehyde, protocatechualdehyde, benzaldehyde, indole-3-aldehyde (IAld), indole-3-acetaldehyde (IAAld), cinnamaldehyde and citral as substrates; AO-beta uses IAAld, IAld and naphtaldehyde as substrates. The chain is Indole-3-acetaldehyde oxidase (AAO1) from Arabidopsis thaliana (Mouse-ear cress).